The sequence spans 1148 residues: MAYPNDVRNVWDVYNVFRDVPNREHLIRDIRNGLVTVRNLTNMLTNMERDDQLIIAQLSNMMKSLSIGVEKAQNELSKLKTTDADRAAVLAAYQTSVLNIERNTMLLTGYFKQLVLDLTGYVGASVYPILPFMITGDQSMMVDSVKVNMKNVFDDKHEQEIVLPIHPACFVSTITEDTSSVVYADGDELYSVHVRHATMTMYVNVLGETVETRQLSMIGESIVPDDFAPSLLILRFSQDSVGEVFYLSHGNMKKFLGYSLEYTDKCSIFDVARRVSTTRNTIPNGFCSVDGVPYLDGRFIYQPSGVSADSNICAIYNSYVLDTLRYITECEVDTLRSVYDQTSSTSFSKTDVLTSSLLTMQSNISALSAATPQLANDVITFDSTDLLSLGTVLTVSNEFTADDTILSTSLAGHCQVDYSEGSPQDKSMSISVSCDSSQLVSSTVHSYSADILGHGLKGDRTMNLMINVPGLMNPQKVTVDYVYSDGYKLNFASVVAPGAPFWINATLQLSVSPSAHNMLSKLTPLDNDACPGLKAQANTPILVSMTINLDDATPALGGEVIQNCVFKIHHGDDVYSFVTDFDVVSYTSTSGTNCLKLISSVDITSQLPSDMVIYVMNGSPDAAFTSGDSVNMSSVDWHQSTSQTVGNYVYTTMKAYWNVTSYDVEARPYTTYVPGKVNFTAVEHADVFVDDYNTGVNSYVIVNSRIYYKGTPLYIEVPSGSFIKVSYFTSPLKNPTVDTYNAEISRNSAYLIKANASLDSVATMLNNISNRIDAMERLMEPTRAQQIAGVVSSIGGVISLGMPLLGAIVVTIGTIISIADPDKQGIDYHSVANAFMSWCQYAAVCRYEYGLLKRGDEKLDVLSFMPKRVVSDFKNKPDVISLPELGESVLRGSSTDYLDTGINIIYNDMQLLGQGKLSGWLNKTVSKVENNAANFFERNLVKSLANKEVLPMHARVEITQTEKIGDVYRTTILYTGINEGSYLGGDVFASRLGDKNILRMNGFESGPGRFKAIVESTTEVGNFRVVDWTVSGMSRYEIYAAAGEIYPSKDPSHADVQLLYESIVRDLTTRDGSFVLKHHDVLLLPGQLDAFEELIIRNASNYQYAFIGSNCQNYAHDVVDILTKFKRPQRWIKDDDFKLYIQSIYDAL.

The PPPDE domain occupies 929–1148 (ENNAANFFER…LYIQSIYDAL (220 aa)). Active-site residues include His953 and Cys1111.

This sequence belongs to the phytoreovirus minor outer capsid protein P2 family. In terms of assembly, interacts with host ent-kaurene oxidases OSKO1, OSKO2, OSKOL4 and OSKOL5; this interaction.

The protein resides in the virion. It localises to the host cytoplasm. Functionally, minor capsid protein present in the outer capsid, which is required for adsorption of the virus onto host insect cells (Potential). Could play a role in the host plant virus induced dwarfism. The chain is Minor outer capsid protein P2 from Rice dwarf virus (isolate O) (RDV).